A 510-amino-acid polypeptide reads, in one-letter code: Gallate 1-beta-glucosyltransferase (510 aa).

The Proton acceptor role is filled by His-19. Residue His-19 participates in an anthocyanidin binding. Positions 343, 358, 361, 362, 363, and 366 each coordinate UDP-alpha-D-glucose. Gly-381 contributes to the an anthocyanidin binding site. UDP-alpha-D-glucose-binding residues include Asp-382 and Gln-383.

This sequence belongs to the UDP-glycosyltransferase family. As to expression, expressed in swelling buds and young leaves.

It carries out the reaction 3,4,5-trihydroxybenzoate + UDP-alpha-D-glucose = 1-O-galloyl-beta-D-glucose + UDP. The enzyme catalyses vanillate + UDP-alpha-D-glucose = 1-O-(4-hydroxy-3-methoxybenzoyl)-beta-D-glucose + UDP. It catalyses the reaction 3,4-dihydroxybenzoate + UDP-alpha-D-glucose = 1-O-(3,4-dihydroxy-benzoyl)-beta-D-glucose + UDP. Its function is as follows. Glucosyltransferase that catalyzes the formation of 1-O-beta-D-glucose esters with hydroxybenzoic acids as preferred glucosyl acceptors. Has the highest activity with 3,4-dihydroxybenzoate, vanillate and gallate in vitro. Gallate is the predicted native substrate of the enzyme, which thus catalyzes the formation of 1-O-galloyl-beta-D-glucose, the first committed step of gallotannin biosynthesis. The protein is Gallate 1-beta-glucosyltransferase of Quercus robur (English oak).